The sequence spans 80 residues: RNA-binding protein Hfq (80 aa).

The 60-residue stretch at 10-69 (DPFLNTLRREHVPVSIYLVNGIKLQGQIESFDQYVVLLKNTVTQMVYKHAISTVVPARPV) folds into the Sm domain.

This sequence belongs to the Hfq family. Homohexamer.

Its function is as follows. RNA chaperone that binds small regulatory RNA (sRNAs) and mRNAs to facilitate mRNA translational regulation in response to envelope stress, environmental stress and changes in metabolite concentrations. Also binds with high specificity to tRNAs. This is RNA-binding protein Hfq from Azoarcus sp. (strain BH72).